Reading from the N-terminus, the 186-residue chain is ADP compounds hydrolase NudE (186 aa).

E40 lines the substrate pocket. The 128-residue stretch at 45–172 (TNREAVMIVP…DFNEARNVSA (128 aa)) folds into the Nudix hydrolase domain. Positions 80–101 (GLIDPGESVYEAANRELKEEVG) match the Nudix box motif. The a divalent metal cation site is built by E95 and E99. S118 is a substrate binding site.

It belongs to the Nudix hydrolase family. In terms of assembly, homodimer. Mg(2+) serves as cofactor.

It carries out the reaction ADP-D-ribose + H2O = D-ribose 5-phosphate + AMP + 2 H(+). Its function is as follows. Active on adenosine(5')triphospho(5')adenosine (Ap3A), ADP-ribose, NADH, adenosine(5')diphospho(5')adenosine (Ap2A). This chain is ADP compounds hydrolase NudE (nudE), found in Escherichia coli (strain K12).